The following is a 262-amino-acid chain: Zinc-finger homeodomain protein 6 (262 aa).

2 stretches are compositionally biased toward basic and acidic residues: residues 1 to 25 (MEVR…DHHR) and 36 to 47 (NKEKPTTKRNGS). The tract at residues 1-93 (MEVREKKDEK…ECQKNHAASS (93 aa)) is disordered. The ZF-HD dimerization-type; degenerate zinc finger occupies 82-131 (YRECQKNHAASSGGHVVDGCGEFMSSGEEGTVESLLCAACDCHRSFHRKE). Residues 198–261 (KKRFRTKFNE…NNKQAAKKKD (64 aa)) constitute a DNA-binding region (homeobox).

Homo- and heterodimer with other ZFHD proteins. Interacts with MIF1 and MIF3; these interactions prevent nuclear localization and DNA-binding to inhibit transcription regulation activity. Binds to ZHD1, ZHD2, ZHD10 and ZHD11. As to expression, expressed in seedlings, roots, leaves, stems, flowers and inflorescence.

The protein localises to the nucleus. In terms of biological role, putative transcription factor. This Arabidopsis thaliana (Mouse-ear cress) protein is Zinc-finger homeodomain protein 6 (ZHD6).